Here is a 529-residue protein sequence, read N- to C-terminus: AT hook-containing protein attf-4 (529 aa).

Disordered regions lie at residues 1 to 39 (MLQP…MEDD), 131 to 158 (QVVH…KPIE), 173 to 200 (GGGG…FPPP), and 233 to 255 (VSAN…DHLE). Composition is skewed to polar residues over residues 19–31 (SVST…SPSN) and 138–153 (QNGS…TSEN). Residues 179-189 (IHTERLSEPAR) are compositionally biased toward basic and acidic residues. Residues 233 to 248 (VSANTSTASPGPSSEG) are compositionally biased toward low complexity. Positions 307–319 (GRGRGRPKLIGDE) form a DNA-binding region, a.T hook. The tract at residues 436–476 (LEGGSPPASSSSTATTSTATKTVKQESKNGHQNEENLNVKQ) is disordered. Residues 443-455 (ASSSSTATTSTAT) show a composition bias toward low complexity. Positions 458-469 (VKQESKNGHQNE) are enriched in basic and acidic residues.

This Caenorhabditis elegans protein is AT hook-containing protein attf-4.